Consider the following 73-residue polypeptide: Tetrahydromethanopterin S-methyltransferase subunit G (73 aa).

A helical transmembrane segment spans residues 48-68 (IGILYGAVVGLLLFLIYVSVS).

The protein belongs to the MtrG family. The complex is composed of 8 subunits; MtrA, MtrB, MtrC, MtrD, MtrE, MtrF, MtrG and MtrH.

The protein resides in the cell membrane. It carries out the reaction 5-methyl-5,6,7,8-tetrahydromethanopterin + coenzyme M + 2 Na(+)(in) = 5,6,7,8-tetrahydromethanopterin + methyl-coenzyme M + 2 Na(+)(out). It functions in the pathway one-carbon metabolism; methanogenesis from CO(2); methyl-coenzyme M from 5,10-methylene-5,6,7,8-tetrahydromethanopterin: step 2/2. Its function is as follows. Part of a complex that catalyzes the formation of methyl-coenzyme M and tetrahydromethanopterin from coenzyme M and methyl-tetrahydromethanopterin. This is an energy-conserving, sodium-ion translocating step. The polypeptide is Tetrahydromethanopterin S-methyltransferase subunit G (Methanosarcina acetivorans (strain ATCC 35395 / DSM 2834 / JCM 12185 / C2A)).